The sequence spans 448 residues: Protein giant (448 aa).

4 disordered regions span residues Met23–Gln47, Gln83–Thr134, Val238–Lys259, and Ile298–Ser363. The segment covering His30–Gln47 has biased composition (low complexity). Residues Asp100–Arg112 are compositionally biased toward basic and acidic residues. Low complexity predominate over residues Pro115 to Thr134. Positions Ile298–Asn310 are enriched in polar residues. Low complexity predominate over residues Ser318–Ser333. One can recognise a bZIP domain in the interval Asp384–Thr447. Residues Arg390–Arg406 form a basic motif region. Residues Ile407–Ile414 form a leucine-zipper region.

The protein belongs to the bZIP family. In terms of assembly, homodimer or heterodimer. In terms of processing, phosphorylated at multiple sites.

The protein localises to the nucleus. Its function is as follows. Represses the expression of both the krueppel and knirps segmentation gap genes. Binds, in vitro, to the krueppel regulatory elements CD1 and CD2. It is required in the early embryo for the development of portions of the head and abdomen. This Drosophila melanogaster (Fruit fly) protein is Protein giant (gt).